The following is a 364-amino-acid chain: MAQQTPLYEQHTLCGARMVDFHGWMMPLHYGSQIDEHHAVRTDAGMFDVSHMTIVDLRGSRTREFLRYLLANDVAKLTKSGKALYSGMLNASGGVIDDLIVYYFTEDFFRLVVNSATREKDLSWITQHAEPFGIEITVRDDLSMIAVQGPNAQAKAATLFNDAQRQAVEGMKPFFGVQAGDLFIATTGYTGEAGYEIALPNEKAADFWRALVEAGVKPCGLGARDTLRLEAGMNLYGQEMDETISPLAANMGWTIAWEPADRDFIGREALEVQREHGTEKLVGLVMTEKGVLRNELPVRFTDAQGNQHEGIITSGTFSPTLGYSIALARVLEGIGETAIVQIRNREMSVKVTKPVFVRNGKAVA.

Belongs to the GcvT family. In terms of assembly, the glycine cleavage system is composed of four proteins: P, T, L and H.

The catalysed reaction is N(6)-[(R)-S(8)-aminomethyldihydrolipoyl]-L-lysyl-[protein] + (6S)-5,6,7,8-tetrahydrofolate = N(6)-[(R)-dihydrolipoyl]-L-lysyl-[protein] + (6R)-5,10-methylene-5,6,7,8-tetrahydrofolate + NH4(+). The glycine cleavage system catalyzes the degradation of glycine. The sequence is that of Aminomethyltransferase from Shigella sonnei (strain Ss046).